Here is a 138-residue protein sequence, read N- to C-terminus: MLQPARRKFRKEQKGRNTGVATRGNSVAFGDFGLKCTDRGRLTARQIEAARRAISRHVKRGGRIWIRVFPDKPISTKPAEVRMGNGKGNPEYYVAEIQPGKVVFEIVGVPEELAREAFRLAAAKLPLRTTFVARQIGA.

Residues Met1–Gln13 show a composition bias toward basic residues. Positions Met1–Thr22 are disordered.

It belongs to the universal ribosomal protein uL16 family. As to quaternary structure, part of the 50S ribosomal subunit.

Its function is as follows. Binds 23S rRNA and is also seen to make contacts with the A and possibly P site tRNAs. This is Large ribosomal subunit protein uL16 from Acidovorax ebreus (strain TPSY) (Diaphorobacter sp. (strain TPSY)).